The sequence spans 360 residues: DNA replication and repair protein RecF (360 aa).

Position 30-37 (30-37 (GQNGSGKT)) interacts with ATP.

The protein belongs to the RecF family.

The protein resides in the cytoplasm. In terms of biological role, the RecF protein is involved in DNA metabolism; it is required for DNA replication and normal SOS inducibility. RecF binds preferentially to single-stranded, linear DNA. It also seems to bind ATP. The protein is DNA replication and repair protein RecF of Shewanella baltica (strain OS185).